We begin with the raw amino-acid sequence, 162 residues long: Shikimate kinase (162 aa).

10 to 15 (GAGKST) lines the ATP pocket. Mg(2+) is bound at residue Ser-14. Substrate is bound by residues Asp-28, Arg-52, and Gly-73. Arg-113 serves as a coordination point for ATP. Arg-129 serves as a coordination point for substrate.

Belongs to the shikimate kinase family. Monomer. Requires Mg(2+) as cofactor.

It localises to the cytoplasm. It carries out the reaction shikimate + ATP = 3-phosphoshikimate + ADP + H(+). It participates in metabolic intermediate biosynthesis; chorismate biosynthesis; chorismate from D-erythrose 4-phosphate and phosphoenolpyruvate: step 5/7. Catalyzes the specific phosphorylation of the 3-hydroxyl group of shikimic acid using ATP as a cosubstrate. The polypeptide is Shikimate kinase (Lactococcus lactis subsp. cremoris (strain SK11)).